The following is a 596-amino-acid chain: UvrABC system protein C (596 aa).

In terms of domain architecture, GIY-YIG spans 16–95; the sequence is SSPGVYRFYS…IKENKPKYNV (80 aa). In terms of domain architecture, UVR spans 209 to 244; it reads SSVKKYYQEKMLSAAEDMQFEKAQFFKERYNSVLGL.

It belongs to the UvrC family. In terms of assembly, interacts with UvrB in an incision complex.

It is found in the cytoplasm. Functionally, the UvrABC repair system catalyzes the recognition and processing of DNA lesions. UvrC both incises the 5' and 3' sides of the lesion. The N-terminal half is responsible for the 3' incision and the C-terminal half is responsible for the 5' incision. The sequence is that of UvrABC system protein C from Cytophaga hutchinsonii (strain ATCC 33406 / DSM 1761 / CIP 103989 / NBRC 15051 / NCIMB 9469 / D465).